The chain runs to 688 residues: PTS system glucoside-specific EIICBA component (688 aa).

The PTS EIIC type-1 domain occupies 3–427; it reads KKLFGQLQRI…FKLKTPGRED (425 aa). Transmembrane regions (helical) follow at residues 12 to 32, 81 to 101, 137 to 157, 182 to 202, 223 to 243, 284 to 304, 315 to 335, 340 to 360, 364 to 384, and 395 to 415; these read IGKALMLPVAILPAAGILLAF, LGLAGGDGVAALAALVGYLIM, LVLGIPTLQTGVFGGIIMGAL, FVPIVTSVVAIATGVLLSFAW, LTTFIFGIIERSLIPFGLHHI, AFTTGKYPFMMFGLPAAAFAI, VVGGLMLSAGLTAFLTGITEP, FLFVAPVLYGIHVLLAGTSFL, LLGVKIGMTFSGGFIDYILYG, and LVIPVGIVYAIVYYFLFDFAI. A PTS EIIB type-1 domain is found at 438–519; it reads AKLPFDVLDA…AKIMSGEITK (82 aa). C460 functions as the Phosphocysteine intermediate; for EIIB activity in the catalytic mechanism. Positions 560 to 664 constitute a PTS EIIA type-1 domain; the sequence is DQVFAGKMMG…SIVTPMIITN (105 aa). H612 (tele-phosphohistidine intermediate; for EIIA activity) is an active-site residue.

It localises to the cell membrane. Its function is as follows. The phosphoenolpyruvate-dependent sugar phosphotransferase system (sugar PTS), a major carbohydrate active -transport system, catalyzes the phosphorylation of incoming sugar substrates concomitantly with their translocation across the cell membrane. This system is involved in alpha- and beta-glucoside transport. In Staphylococcus aureus (strain JH1), this protein is PTS system glucoside-specific EIICBA component (glcB).